A 95-amino-acid polypeptide reads, in one-letter code: uncharacterized protein (95 aa).

It belongs to the inositol monophosphatase superfamily.

This is an uncharacterized protein from Rhizobium leguminosarum bv. phaseoli.